A 474-amino-acid chain; its full sequence is Bifunctional protein HldE (474 aa).

The interval 1 to 317 (MKLSMPRFDR…RRAVQREQGS (317 aa)) is ribokinase. Residue 194–197 (NLAE) coordinates ATP. The active site involves Asp263. The segment at 343-474 (FTNGCFDILH…GIVEKIRRQP (132 aa)) is cytidylyltransferase.

This sequence in the N-terminal section; belongs to the carbohydrate kinase PfkB family. In the C-terminal section; belongs to the cytidylyltransferase family. In terms of assembly, homodimer.

The catalysed reaction is D-glycero-beta-D-manno-heptose 7-phosphate + ATP = D-glycero-beta-D-manno-heptose 1,7-bisphosphate + ADP + H(+). The enzyme catalyses D-glycero-beta-D-manno-heptose 1-phosphate + ATP + H(+) = ADP-D-glycero-beta-D-manno-heptose + diphosphate. The protein operates within nucleotide-sugar biosynthesis; ADP-L-glycero-beta-D-manno-heptose biosynthesis; ADP-L-glycero-beta-D-manno-heptose from D-glycero-beta-D-manno-heptose 7-phosphate: step 1/4. It functions in the pathway nucleotide-sugar biosynthesis; ADP-L-glycero-beta-D-manno-heptose biosynthesis; ADP-L-glycero-beta-D-manno-heptose from D-glycero-beta-D-manno-heptose 7-phosphate: step 3/4. Its function is as follows. Catalyzes the phosphorylation of D-glycero-D-manno-heptose 7-phosphate at the C-1 position to selectively form D-glycero-beta-D-manno-heptose-1,7-bisphosphate. Functionally, catalyzes the ADP transfer from ATP to D-glycero-beta-D-manno-heptose 1-phosphate, yielding ADP-D-glycero-beta-D-manno-heptose. The sequence is that of Bifunctional protein HldE from Azotobacter vinelandii (strain DJ / ATCC BAA-1303).